A 645-amino-acid chain; its full sequence is Putative palmitoyltransferase ZDHHC13 (645 aa).

The tract at residues 1-73 (MDWSEGDGSH…KSSHPEDSSS (73 aa)) is disordered. Topologically, residues 1-314 (MDWSEGDGSH…ACLKLLNRYK (314 aa)) are cytoplasmic. Over residues 7–20 (DGSHSHGHMGDSCH) the composition is skewed to basic and acidic residues. The span at 23–33 (GGGHSHGHGHS) shows a compositional bias: basic residues. A compositionally biased stretch (gly residues) spans 34–43 (HGGSGFGGFM). 5 ANK repeats span residues 104 to 133 (ENVT…VIDQ), 138 to 167 (LNST…DPSL), 171 to 200 (EGYR…EVDL), 204 to 234 (NGQT…SVNA), and 239 to 268 (NRNS…SVDM). Residues 315 to 335 (VCLQSVFSVVVVGAFGAILDM) traverse the membrane as a helical segment. Residue R336 is a topological domain, lumenal. A helical transmembrane segment spans residues 337-357 (TESWLLKGILLACIMAVINLA). Residues 358-369 (SRQLATVAVRSL) are Cytoplasmic-facing. The chain crosses the membrane as a helical span at residues 370-390 (IPSTGLIASVFWMVVTWVLWF). The Lumenal segment spans residues 391–394 (LPDE). Residues 395–415 (PSAAVQMLFTVNITAVLYYYI) form a helical membrane-spanning segment. Over 416 to 492 (RSCRTDPGHV…NGCIGARNHP (77 aa)) the chain is Cytoplasmic. One can recognise a DHHC domain in the interval 449–499 (IFCTSCMMRKPMRANHCFSCNACVAKQDHHSIWINGCIGARNHPFFVLFLV). Residues 493–513 (FFVLFLVALNFLCIWMFYGSI) form a helical membrane-spanning segment. The Lumenal portion of the chain corresponds to 514 to 542 (TYWSRHCPLHYSEEGIWGALTALMGCSPW). The chain crosses the membrane as a helical span at residues 543–563 (LLYVFCFVFFHTTWASILLVL). Residues 564-645 (QLYQIAFLGL…RDMFSSPDAV (82 aa)) lie on the Cytoplasmic side of the membrane.

The protein belongs to the DHHC palmitoyltransferase family. AKR/ZDHHC17 subfamily.

The protein localises to the golgi apparatus membrane. The protein resides in the cytoplasmic vesicle membrane. In terms of biological role, putative palmitoyltransferase that could catalyze the addition of palmitate onto various protein substrates. This Danio rerio (Zebrafish) protein is Putative palmitoyltransferase ZDHHC13.